A 443-amino-acid chain; its full sequence is Probable glycine dehydrogenase (decarboxylating) subunit 1 (443 aa).

It belongs to the GcvP family. N-terminal subunit subfamily. In terms of assembly, the glycine cleavage system is composed of four proteins: P, T, L and H. In this organism, the P 'protein' is a heterodimer of two subunits.

The enzyme catalyses N(6)-[(R)-lipoyl]-L-lysyl-[glycine-cleavage complex H protein] + glycine + H(+) = N(6)-[(R)-S(8)-aminomethyldihydrolipoyl]-L-lysyl-[glycine-cleavage complex H protein] + CO2. Functionally, the glycine cleavage system catalyzes the degradation of glycine. The P protein binds the alpha-amino group of glycine through its pyridoxal phosphate cofactor; CO(2) is released and the remaining methylamine moiety is then transferred to the lipoamide cofactor of the H protein. This chain is Probable glycine dehydrogenase (decarboxylating) subunit 1, found in Nitratidesulfovibrio vulgaris (strain DP4) (Desulfovibrio vulgaris).